Here is a 1017-residue protein sequence, read N- to C-terminus: MYRKNANFVECEEEVLEYWRRNKSFERSCERSRGREKFTFYDGPPFATGLPHYGHLLSGTIKDTVTRFFYQQGYDVDRRFGWDCHGLPVEYEIDKKLGISSRAEVLEMGIGKYNAECRGIVMKYSSEWEAVVERLGRWVSFRDGYRTMDMTFMESVWNIFKELFSRGLIYRGFRVMPFSTACSTPLSNFESNQNYKDVSDPSVLIAFPLLKPLGGYMLSLVAWTTTPWTLPSNCGLAVNPGFLYGVFEHKEKFYLMHVDRIGEYFKDARILQRVSGRELEGLEYEQPFDYFEEYRKKGFFRVLASGFVTDTDGTGVVHCAPGFGECDYNAFVEKGLIRENDLVPCPVDENGRYTSEVRRYAGRYVKDCDKAILSDIRDKVLMNQRIVHKYPFCWRSDTPLLYKLVPNWFVKVKDHVDSLLRNNEKINWVPPDIKYKRFHNWLENARDWSISRNRFWGTPIPLWVTEDYSDMICIGSVGELEELSGRKIDDIHREFIDGIVIHRNGREYRRVEEVLDCWFESGSMPYAQDHWPFCKESGVDLGSLSVSGGEERNKKLVKENFPAHFIGEGLDQTRGWFYTLHVISSLLFGQPAFLNVVVNGIVLAEDGRKMSKRLRNYPDPSHIFNTYGADSLRMYLISSPVVEAENLKFSEGGVKEVLKTLIIPWYNSLGFYLENRDVEPDGRSLPMDGWITASFDNFAWSLTRKMRKYELSSVLTLALRFIDDLSNWYIRMYRKEIRAGHHAVLGEILKKFSIVMGPFTPFFSEYSYQSLNPGESVHFQEYPVCKNGTHPFEMAKSIIAAVRRLRETNSISLKTPLKSATLMSSSSLYEGIKDYIDAIKTECNVLELLYKEEDRSMFDITVKPNFLSLKKDKATMKKKMKVIQGLTGDQAYSLLSSPLVVDGLEILRDDVLIVKKIRCEGIAQEFGDFSIIIDNTLDEGMVKMKIAREFHSYIQKLRKSAGLRVGDDVVVDIQCPDLKGIVSKYFDISFGSLGALSGRGEYEFDGTLYPVSLYKKL.

The 'HIGH' region signature appears at proline 45 to histidine 55. The 'KMSKS' region signature appears at lysine 609 to arginine 613. Lysine 612 serves as a coordination point for ATP.

It belongs to the class-I aminoacyl-tRNA synthetase family.

It localises to the cytoplasm. It catalyses the reaction tRNA(Ile) + L-isoleucine + ATP = L-isoleucyl-tRNA(Ile) + AMP + diphosphate. The protein is Probable isoleucine--tRNA ligase, cytoplasmic of Encephalitozoon cuniculi (strain GB-M1) (Microsporidian parasite).